The sequence spans 98 residues: Aspartyl/glutamyl-tRNA(Asn/Gln) amidotransferase subunit C (98 aa).

Belongs to the GatC family. In terms of assembly, heterotrimer of A, B and C subunits.

It catalyses the reaction L-glutamyl-tRNA(Gln) + L-glutamine + ATP + H2O = L-glutaminyl-tRNA(Gln) + L-glutamate + ADP + phosphate + H(+). The catalysed reaction is L-aspartyl-tRNA(Asn) + L-glutamine + ATP + H2O = L-asparaginyl-tRNA(Asn) + L-glutamate + ADP + phosphate + 2 H(+). Functionally, allows the formation of correctly charged Asn-tRNA(Asn) or Gln-tRNA(Gln) through the transamidation of misacylated Asp-tRNA(Asn) or Glu-tRNA(Gln) in organisms which lack either or both of asparaginyl-tRNA or glutaminyl-tRNA synthetases. The reaction takes place in the presence of glutamine and ATP through an activated phospho-Asp-tRNA(Asn) or phospho-Glu-tRNA(Gln). This chain is Aspartyl/glutamyl-tRNA(Asn/Gln) amidotransferase subunit C, found in Roseiflexus castenholzii (strain DSM 13941 / HLO8).